The sequence spans 1190 residues: MDGWSEVLRIPSSVFATDNYNNPTTIVNITSLQFDSVQNFIWCGDSRGYTRSFTGSFATNSLYGNLQLYPYTKFHTSDVNYNNPIKQILSHREGILSLSNNAISFNSRRGLSKLQVTSKTFNNNATTENKFNNLQAMTFNCNSFNDVVVGTDTSMMKFDLNKPNVLSSFDHQGGISLLNNLGKFLTIANSNGSLDIFDPVSNSTMKTFSAHNGFISNLDVRGNYIATCGYSIKPKRYYHNQPAEYIVDPLVNIYDTRIMRAIAPVPFPAGAASVKFHPKLPNIIIIASTSGQMQFVDIFDQTNVYLYQADLAIPTTTTTTINNKPRMSNLEISENGDFLVFNDNCDNMHLWSISPSSKDFVNFPQPVEQPDIIDSNFEIIDIDANVPLSIVGMPYYKELLLSNYPNDLRFVKETAKLPEPIDIELILENETRNNGTKKFFPYDKLKYGPGNVYKPYQSLKDNKENKEISIPKFISERSTTTTTTTKELKADNDGKFIDDSIFQYKFQGKLNKVPNCYSRLQIQYSKFGIKDFDFSYYNKTKECCGLENHTDNSYINSLLQLYRFQSSIYNQVVGSLSKEWLPNDITTIITTNNPEGSSILNELGYLFDMMFKAQSNNVKIYNLSQVLNHHPNAQKLLNNNELLNLNSQQVRDLVIEFNNFLLTTLHQDFQTQFQENFNLTELKYEIEIKGNGTSCPMYDKHQGSMFSLELITPPSNMLNKMSILINNNNNNNNPQYQPEPISSLDNIRRNLNILTYLEYSMNQYKTIPCQQHNHSYPHNLEIQTSIVHLPSVLTINVNLSNPEFKIINNFTQWLVPEFYAVKSKSISGKNGYSFKEIDHPTPNSATQESGKYKYKYELLGYVCEINHQSDIVSGAHNLVAFIKVNNNGGWYLFNDFLVMPIPEEEVFDLQPSWKKPIVIMYQQTNQPSFNYLTTTTTTTTTTTTFSNAGKYDDSILYRDHFAEGIRKGHQLEYELLTRKESPQPGSLVAIDAEFVMLKPEELEIHYDGYKKLIKPKQLSLARISVLRENGIPFIDDYIVHTSDIYDYLTNFSGIEPNDLNLTLSNRENLVTLQTAYRKLWLLLNLGVIFVGHGLYNDFRTINLQVPERQIRDTAVIYYKSDFKRQLSLKFLAYVMLKEKVQSGNHDSIEDANTALLLYKKYQNLYNKEDFESILNYIYSEGQQLRFKVPE.

6 WD repeats span residues 24 to 63 (TTIVNITSLQFDSVQNFIWCGDSRGYTRSFTGSFATNSLY), 129 to 166 (NKFNNLQAMTFNCNSFNDVVVGTDTSMMKFDLNKPNVL), 167 to 207 (SSFD…TMKT), 222 to 264 (GNYI…AIAP), 266 to 306 (PFPA…NVYL), and 322 to 361 (NNKPRMSNLEISENGDFLVFNDNCDNMHLWSISPSSKDFV). Residues 364–511 (PQPVEQPDII…FQYKFQGKLN (148 aa)) form a linker region. Residues 512 to 924 (KVPNCYSRLQ…KPIVIMYQQT (413 aa)) form the USP domain. An Exonuclease domain is found at 988 to 1158 (VAIDAEFVML…EDANTALLLY (171 aa)). A divalent metal cation-binding residues include Asp991, Glu993, Asp1097, and Asp1150.

This sequence belongs to the peptidase C19 family. PAN2 subfamily. In terms of assembly, forms a heterotrimer with an asymmetric homodimer of the regulatory subunit PAN3 to form the poly(A)-nuclease (PAN) deadenylation complex. Requires a divalent metal cation as cofactor.

The protein localises to the cytoplasm. The enzyme catalyses Exonucleolytic cleavage of poly(A) to 5'-AMP.. With respect to regulation, positively regulated by the regulatory subunit PAN3. In terms of biological role, catalytic subunit of the poly(A)-nuclease (PAN) deadenylation complex, one of two cytoplasmic mRNA deadenylases involved in mRNA turnover. PAN specifically shortens poly(A) tails of RNA and the activity is stimulated by poly(A)-binding protein PAB1. PAN deadenylation is followed by rapid degradation of the shortened mRNA tails by the CCR4-NOT complex. Deadenylated mRNAs are then degraded by two alternative mechanisms, namely exosome-mediated 3'-5' exonucleolytic degradation, or deadenylation-dependent mRNA decaping and subsequent 5'-3' exonucleolytic degradation by XRN1. May also be involved in post-transcriptional maturation of mRNA poly(A) tails. The polypeptide is PAN2-PAN3 deadenylation complex catalytic subunit PAN2 (Candida albicans (strain SC5314 / ATCC MYA-2876) (Yeast)).